The chain runs to 421 residues: Thymidine phosphorylase (421 aa).

The protein belongs to the thymidine/pyrimidine-nucleoside phosphorylase family. Homodimer.

It carries out the reaction thymidine + phosphate = 2-deoxy-alpha-D-ribose 1-phosphate + thymine. Its function is as follows. The enzymes which catalyze the reversible phosphorolysis of pyrimidine nucleosides are involved in the degradation of these compounds and in their utilization as carbon and energy sources, or in the rescue of pyrimidine bases for nucleotide synthesis. In Mycoplasma pneumoniae (strain ATCC 29342 / M129 / Subtype 1) (Mycoplasmoides pneumoniae), this protein is Thymidine phosphorylase (deoA).